A 577-amino-acid chain; its full sequence is MTEQSEHSNGGVCASSIQPARNGGLCGHGGVGGVGEAEGDPVHTQIIQEDNPFVEHGQSYVAPHSGGGRTSSGSSSSASLQEGLLAPPLAKSSAGEQGRVRILEASKVSEGQGRSYITYTISYRDRVVRRRYSEFESLRKILIKLFPMTLIPPIPEKQSLTSYGKSIAGSNANYVLPSEAAGCDLAVSVINGSVNLNDQKMIRHRIRMLTSFLNRLLQNEEVTKTSIIGDFLDPNNANWNDVITTSATISSLPKSVLQCNPLDPTNTTPAHASLPIPPLSSAPQLMGKDGVGTSTKPSAEDMEFSRIEYEYKKYEQLLHTGVYKYNRRITRTMHELKQDLADLSEAFAEFAVEQSKGGDLAELLSYLSNANDEAAAVLDDLVGKIYYNINEPLSEAVHIAGAARELIQYRRLKFAQRDMLKKSLLGKEGHLKRLQEQEDDAKAIDQLVDQHLGEGTRINLQRPSEASPNTYKRKLFSRFNKLANIVKETVTYQEQDPKVNIKTVQEDIEQIKESLDVSASDLDVITATIRDVQLPAFSRNRDKELYDILKNYSKYMKEYAAKNLEIWKDLRKQEENA.

The tract at residues 57–81 (GQSYVAPHSGGGRTSSGSSSSASLQ) is disordered. The region spanning 95-239 (GEQGRVRILE…DFLDPNNANW (145 aa)) is the PX domain. A 1,2-diacyl-sn-glycero-3-phospho-(1D-myo-inositol-3-phosphate)-binding residues include Arg-131, Ser-133, Lys-157, and Arg-205.

Belongs to the sorting nexin family.

It localises to the endosome membrane. It is found in the preautophagosomal structure membrane. Its function is as follows. Required for cytoplasm to vacuole transport (Cvt), pexophagy and mitophagy. Also involved in endoplasmic reticulum-specific autophagic process and is essential for the survival of cells subjected to severe ER stress. Functions in protein retrieval from the endocytic pathway. This is Autophagy-related protein 20 (ATG20) from Eremothecium gossypii (strain ATCC 10895 / CBS 109.51 / FGSC 9923 / NRRL Y-1056) (Yeast).